The primary structure comprises 514 residues: ATP synthase subunit alpha (514 aa).

Glycine 170 to serine 177 contributes to the ATP binding site.

It belongs to the ATPase alpha/beta chains family. In terms of assembly, F-type ATPases have 2 components, CF(1) - the catalytic core - and CF(0) - the membrane proton channel. CF(1) has five subunits: alpha(3), beta(3), gamma(1), delta(1), epsilon(1). CF(0) has three main subunits: a(1), b(2) and c(9-12). The alpha and beta chains form an alternating ring which encloses part of the gamma chain. CF(1) is attached to CF(0) by a central stalk formed by the gamma and epsilon chains, while a peripheral stalk is formed by the delta and b chains.

The protein resides in the cell inner membrane. The catalysed reaction is ATP + H2O + 4 H(+)(in) = ADP + phosphate + 5 H(+)(out). In terms of biological role, produces ATP from ADP in the presence of a proton gradient across the membrane. The alpha chain is a regulatory subunit. The sequence is that of ATP synthase subunit alpha from Chromohalobacter salexigens (strain ATCC BAA-138 / DSM 3043 / CIP 106854 / NCIMB 13768 / 1H11).